We begin with the raw amino-acid sequence, 287 residues long: AA9 family lytic polysaccharide monooxygenase C (287 aa).

The signal sequence occupies residues 1–16; sequence MKSVLVALATATAVSA. H17 is a Cu(2+) binding site. N-linked (GlcNAc...) asparagine glycosylation occurs at N22. Intrachain disulfides connect C77/C230 and C200/C284. Residue H114 participates in Cu(2+) binding. 2 residues coordinate O2: H216 and Q225. Position 227 (Y227) interacts with Cu(2+).

The protein belongs to the polysaccharide monooxygenase AA9 family. Cu(2+) serves as cofactor.

It is found in the secreted. The enzyme catalyses [(1-&gt;4)-beta-D-glucosyl]n+m + reduced acceptor + O2 = 4-dehydro-beta-D-glucosyl-[(1-&gt;4)-beta-D-glucosyl]n-1 + [(1-&gt;4)-beta-D-glucosyl]m + acceptor + H2O.. In terms of biological role, lytic polysaccharide monooxygenase (LPMO) that depolymerizes crystalline and amorphous polysaccharides via the oxidation of scissile alpha- or beta-(1-4)-glycosidic bonds, yielding C1 or C4 oxidation products. Catalysis by LPMOs requires the reduction of the active-site copper from Cu(II) to Cu(I) by a reducing agent and H(2)O(2) or O(2) as a cosubstrate. This is AA9 family lytic polysaccharide monooxygenase C from Podospora anserina (strain S / ATCC MYA-4624 / DSM 980 / FGSC 10383) (Pleurage anserina).